The following is a 159-amino-acid chain: Large ribosomal subunit protein uL23m (159 aa).

Belongs to the universal ribosomal protein uL23 family. As to quaternary structure, component of the mitochondrial ribosome large subunit (39S) which comprises a 16S rRNA and about 50 distinct proteins.

It is found in the mitochondrion. The protein is Large ribosomal subunit protein uL23m (mrpl-23) of Caenorhabditis briggsae.